The chain runs to 298 residues: MTSIAAPQPGLLRQYLVLTKPRVTQLAVFCAVIGMFLAVPGLPDLKRVLFGTIGIWLLAAAAFAINCLIEQEIDARMTRTARRGTARGTISPAQVLSLSGLLGGAGMLVLYHLVNPLTMWLTFATFVGYAVIYTVILKPRTPQNIVIGGLSGAMPPALGWASVANAVPAEAWVLVLIIFIWTPPHFWALALYRTEDYRKAGLPMLPITHGSKHTRLQIMLYSFALFAVTLLPYFMHMNGLLYLLAAVILGGIFVAHALRLYRSYSDERSRRLFRYSILYLALLFGALLVDHWVGVLSA.

8 helical membrane passes run 23-43, 49-69, 95-115, 117-137, 144-164, 171-191, 234-254, and 276-296; these read VTQL…PGLP, LFGT…NCLI, VLSL…HLVN, LTMW…TVIL, NIVI…ASVA, AWVL…ALAL, FMHM…GIFV, and SILY…VGVL.

It belongs to the UbiA prenyltransferase family. Protoheme IX farnesyltransferase subfamily.

Its subcellular location is the cell inner membrane. It catalyses the reaction heme b + (2E,6E)-farnesyl diphosphate + H2O = Fe(II)-heme o + diphosphate. It functions in the pathway porphyrin-containing compound metabolism; heme O biosynthesis; heme O from protoheme: step 1/1. Its function is as follows. Converts heme B (protoheme IX) to heme O by substitution of the vinyl group on carbon 2 of heme B porphyrin ring with a hydroxyethyl farnesyl side group. The protein is Protoheme IX farnesyltransferase of Bordetella avium (strain 197N).